Here is a 1320-residue protein sequence, read N- to C-terminus: FERM and PDZ domain-containing protein 4 (1320 aa).

A WW domain is found at 33–66 (QVPPYGWEMMTNRDGRDYFINHMTQAIPFDDPRF). Residues 78-155 (KVEMRRDPVL…SILLTVIQPY (78 aa)) form the PDZ domain. The FERM domain maps to 204 to 519 (NVLKVYLENG…GYYRLLVDSR (316 aa)). 6 disordered regions span residues 809 to 847 (APPP…EIPV), 897 to 927 (YSPE…QKQS), 949 to 981 (TEFP…PPKV), 1024 to 1050 (KRKS…QQGT), 1114 to 1139 (PRGP…ADDA), and 1204 to 1274 (GHFS…ATFE). Residues 900-913 (ESSSDSGNETNSSE) are compositionally biased toward low complexity. A compositionally biased stretch (polar residues) spans 1204 to 1217 (GHFSLQSSQGSSVD). Low complexity predominate over residues 1223-1232 (GSSSSACATP).

Interacts (via C-terminus) with DLG1, DLG2, DLG3 and DLG4/PSD95. Interacts (via N-terminus) with ARHGEF7; the interaction is mediated by the PDZ domain. Interacts with GPSM2 (via TPR repeat region). In terms of tissue distribution, expressed in various regions of the brain, including cortex, hippocampus, cerebellum, olfactory bulb and medial habenular nucleus.

The protein resides in the cell projection. It is found in the dendritic spine. Its function is as follows. Positive regulator of dendritic spine morphogenesis and density. Required for the maintenance of excitatory synaptic transmission. Binds phosphatidylinositol 4,5-bisphosphate. In Mus musculus (Mouse), this protein is FERM and PDZ domain-containing protein 4 (Frmpd4).